The chain runs to 160 residues: Inner membrane protein YcdZ (160 aa).

5 helical membrane-spanning segments follow: residues 20-42 (WGAV…YFAC), 50-70 (LLIS…IIHG), 72-92 (ALAP…AFLM), 99-119 (LLLS…AGQG), and 123-143 (LVLP…NSGL).

This sequence to E.coli YahC.

The protein resides in the cell inner membrane. This Salmonella typhimurium (strain LT2 / SGSC1412 / ATCC 700720) protein is Inner membrane protein YcdZ (ycdZ).